The sequence spans 255 residues: 3-deoxy-manno-octulosonate cytidylyltransferase (255 aa).

It belongs to the KdsB family.

It localises to the cytoplasm. The catalysed reaction is 3-deoxy-alpha-D-manno-oct-2-ulosonate + CTP = CMP-3-deoxy-beta-D-manno-octulosonate + diphosphate. Its pathway is nucleotide-sugar biosynthesis; CMP-3-deoxy-D-manno-octulosonate biosynthesis; CMP-3-deoxy-D-manno-octulosonate from 3-deoxy-D-manno-octulosonate and CTP: step 1/1. The protein operates within bacterial outer membrane biogenesis; lipopolysaccharide biosynthesis. Activates KDO (a required 8-carbon sugar) for incorporation into bacterial lipopolysaccharide in Gram-negative bacteria. This Saccharophagus degradans (strain 2-40 / ATCC 43961 / DSM 17024) protein is 3-deoxy-manno-octulosonate cytidylyltransferase.